A 241-amino-acid polypeptide reads, in one-letter code: Probable transcriptional regulatory protein stu0195 (241 aa).

The protein belongs to the TACO1 family. YeeN subfamily.

It is found in the cytoplasm. This chain is Probable transcriptional regulatory protein stu0195, found in Streptococcus thermophilus (strain ATCC BAA-250 / LMG 18311).